A 145-amino-acid polypeptide reads, in one-letter code: UPF0179 protein MmarC7_0952 (145 aa).

It belongs to the UPF0179 family.

In Methanococcus maripaludis (strain C7 / ATCC BAA-1331), this protein is UPF0179 protein MmarC7_0952.